A 352-amino-acid polypeptide reads, in one-letter code: Coproporphyrin III ferrochelatase (352 aa).

Ser52 and Tyr121 together coordinate Fe-coproporphyrin III. 2 residues coordinate Fe(2+): His178 and Glu267.

The protein belongs to the ferrochelatase family.

The protein localises to the cytoplasm. It catalyses the reaction Fe-coproporphyrin III + 2 H(+) = coproporphyrin III + Fe(2+). The protein operates within porphyrin-containing compound metabolism; protoheme biosynthesis. Involved in coproporphyrin-dependent heme b biosynthesis. Catalyzes the insertion of ferrous iron into coproporphyrin III to form Fe-coproporphyrin III. The protein is Coproporphyrin III ferrochelatase of Propionibacterium freudenreichii subsp. freudenreichii.